Reading from the N-terminus, the 451-residue chain is 3-phosphoshikimate 1-carboxyvinyltransferase (451 aa).

3-phosphoshikimate contacts are provided by K30, S31, and R35. Residue K30 coordinates phosphoenolpyruvate. Positions 101 and 130 each coordinate phosphoenolpyruvate. Residues S176, S177, Q178, D321, and K348 each contribute to the 3-phosphoshikimate site. A phosphoenolpyruvate-binding site is contributed by Q178. D321 (proton acceptor) is an active-site residue. Phosphoenolpyruvate-binding residues include R352 and Q422.

The protein belongs to the EPSP synthase family. In terms of assembly, monomer.

The protein localises to the cytoplasm. The catalysed reaction is 3-phosphoshikimate + phosphoenolpyruvate = 5-O-(1-carboxyvinyl)-3-phosphoshikimate + phosphate. It participates in metabolic intermediate biosynthesis; chorismate biosynthesis; chorismate from D-erythrose 4-phosphate and phosphoenolpyruvate: step 6/7. In terms of biological role, catalyzes the transfer of the enolpyruvyl moiety of phosphoenolpyruvate (PEP) to the 5-hydroxyl of shikimate-3-phosphate (S3P) to produce enolpyruvyl shikimate-3-phosphate and inorganic phosphate. In Burkholderia pseudomallei (strain K96243), this protein is 3-phosphoshikimate 1-carboxyvinyltransferase.